Reading from the N-terminus, the 64-residue chain is SPbeta prophage-derived uncharacterized protein YopV (64 aa).

This Bacillus subtilis (strain 168) protein is SPbeta prophage-derived uncharacterized protein YopV (yopV).